The primary structure comprises 1526 residues: uncharacterized protein (1526 aa).

WD repeat units lie at residues 334–376 (CTKE…EHIS), 862–901 (KILG…ELLT), 904–945 (GHNS…KTFK), 946–985 (GHTS…CLYI), 988–1027 (GHTG…CFYI), 1030–1069 (GHTS…CLYT), 1072–1111 (GHTS…CLYT), 1114–1153 (GYTS…CLYT), 1156–1195 (GHTN…CLYI), 1198–1237 (GHTS…CLCT), 1240–1279 (GHTS…CLHT), 1282–1321 (GHTN…CLHT), 1324–1363 (GHTS…CLYT), 1366–1405 (GHTN…CLYT), 1408–1447 (GHNN…CLYT), and 1450–1491 (GHIN…KTLK). The region spanning 823 to 862 (MVLEGRDLSHTVIIGADFTNTSLRCVNFTEANLAYSVFTK) is the Pentapeptide repeat domain.

This is an uncharacterized protein from Nostoc sp. (strain PCC 7120 / SAG 25.82 / UTEX 2576).